Here is a 440-residue protein sequence, read N- to C-terminus: MILKNVKLKSGEITVPGDKSLSHRSVLFAALCKGKSKVTGFLEAEDPLNTMSAFTKLGLKVRKVKPGEYEFESPGKRGFISPNVDLDFGNAGTGIRLSAGLLCGLPGVNAVLTGDGSLKKRPMGRIIKPLTAMGASILGLGEKETAPLKVEGKKLKSFRYESPIASAQIKSCLMLAAIASETDLEYSENILSRDHTENMFRFLGNKIEQISPFHFKIEPPYVLNGGEFKVPGDISSAAFFLVLGVLAKEGNLLVRNIGLNPARIGILKALELMGAKIEIRNQRMECGEPVGDLKTYPSILNKTNIPKSLIPSIIDEIPILSVAGLFAKGGFEIRHAEELRAKESDRIHTMVSNFRALGIEVEEYPDGYAFDGTSPQSLEIWKFLASGKKISILSHMDHRITMSFLIFKTLSGFNLHIDETSWIETSFPGFEKLLESCLDE.

3-phosphoshikimate contacts are provided by Lys19, Ser20, and Arg24. Residue Lys19 participates in phosphoenolpyruvate binding. Phosphoenolpyruvate is bound by residues Gly92 and Arg121. 3-phosphoshikimate is bound by residues Ser166, Gln168, Asp315, and Lys342. Phosphoenolpyruvate is bound at residue Gln168. The active-site Proton acceptor is the Asp315. Residues Arg346 and Arg399 each coordinate phosphoenolpyruvate.

The protein belongs to the EPSP synthase family. Monomer.

It localises to the cytoplasm. It carries out the reaction 3-phosphoshikimate + phosphoenolpyruvate = 5-O-(1-carboxyvinyl)-3-phosphoshikimate + phosphate. Its pathway is metabolic intermediate biosynthesis; chorismate biosynthesis; chorismate from D-erythrose 4-phosphate and phosphoenolpyruvate: step 6/7. Its function is as follows. Catalyzes the transfer of the enolpyruvyl moiety of phosphoenolpyruvate (PEP) to the 5-hydroxyl of shikimate-3-phosphate (S3P) to produce enolpyruvyl shikimate-3-phosphate and inorganic phosphate. This chain is 3-phosphoshikimate 1-carboxyvinyltransferase, found in Leptospira borgpetersenii serovar Hardjo-bovis (strain JB197).